The primary structure comprises 316 residues: tRNA-cytidine(32) 2-sulfurtransferase (316 aa).

The PP-loop motif motif lies at serine 52–serine 57. Cysteine 127, cysteine 130, and cysteine 218 together coordinate [4Fe-4S] cluster.

This sequence belongs to the TtcA family. In terms of assembly, homodimer. Mg(2+) is required as a cofactor. The cofactor is [4Fe-4S] cluster.

The protein resides in the cytoplasm. It carries out the reaction cytidine(32) in tRNA + S-sulfanyl-L-cysteinyl-[cysteine desulfurase] + AH2 + ATP = 2-thiocytidine(32) in tRNA + L-cysteinyl-[cysteine desulfurase] + A + AMP + diphosphate + H(+). It participates in tRNA modification. Catalyzes the ATP-dependent 2-thiolation of cytidine in position 32 of tRNA, to form 2-thiocytidine (s(2)C32). The sulfur atoms are provided by the cysteine/cysteine desulfurase (IscS) system. The sequence is that of tRNA-cytidine(32) 2-sulfurtransferase from Haemophilus ducreyi (strain 35000HP / ATCC 700724).